The following is a 443-amino-acid chain: Exodeoxyribonuclease 7 large subunit (443 aa).

This sequence belongs to the XseA family. As to quaternary structure, heterooligomer composed of large and small subunits.

It localises to the cytoplasm. The enzyme catalyses Exonucleolytic cleavage in either 5'- to 3'- or 3'- to 5'-direction to yield nucleoside 5'-phosphates.. Functionally, bidirectionally degrades single-stranded DNA into large acid-insoluble oligonucleotides, which are then degraded further into small acid-soluble oligonucleotides. This chain is Exodeoxyribonuclease 7 large subunit, found in Vibrio campbellii (strain ATCC BAA-1116).